Reading from the N-terminus, the 650-residue chain is MAELVGPLRKQLADSLSSCRVLVVGAGGIGCELLKNLVLTGFKNIEVIDLDTIDVSNLNRQFLFQKKHVGKSKAQVAKESVLRFCPSANITAYHDSIMNPDYNVEFFRNFQLVMNALDNRAARNHVNRMCLAADIPLIESGTAGYLGQVTVIKKGQTECYECQPKPTQKTFPGCTIRNTPSEPIHCIVWAKYLFNQLFGEEDADQEVSPDTADPEAAWNPADAAARATASDQDGDIKRVSTKEWARSTGYDPIKLFNKVSALSQTSPYLFKDDIMYLLTMDKLWKKRKAPLPLEWEEINQLGSQEQVIGSGLKDQQVLGVQGYAQLFQHSVETLRSQLKEKGDGAELVWDKDDPPAMDFVTAASNLRMNVFSMNMKSRFDVKSMAGNIIPAIATTNAVIAGLIVLEALKILNSDFEQCRTIFLNKQPNPRKKLLVPCALDPPNASCYVCASKPEVTVKLNVHKTMVQALQDKILKEKFGMVAPDVQIEDGKGTILISSEEGETEANNNKFLSDFGIRNGSRLQADDFLQDYTLLVNVIHSEELEKDVEFEVVGDAPDKAPAPSAPEEGKNIANGNKDSAQPSTSSKAAVEDDDVLLVDSDEEPSSSTMDTESSNRKRKHHDAETDDASSKRKRLDQQPADDDDEDIIALD.

Residues 25-30 (GAGGIG), D49, 57-60 (NLNR), K73, 96-97 (SI), and 118-123 (DNRAAR) each bind ATP. Residues C159 and C162 each coordinate Zn(2+). The Glycyl thioester intermediate role is filled by C174. K191 participates in a covalent cross-link: Glycyl lysine isopeptide (Lys-Gly) (interchain with G-Cter in SUMO). K237 is covalently cross-linked (Glycyl lysine isopeptide (Lys-Gly) (interchain with G-Cter in SUMO1)). Glycyl lysine isopeptide (Lys-Gly) (interchain with G-Cter in SUMO) cross-links involve residues K258, K282, and K286. Zn(2+) contacts are provided by C446 and C449. Positions 554–650 (DAPDKAPAPS…DDDEDIIALD (97 aa)) are disordered. Positions 572–586 (ANGNKDSAQPSTSSK) are enriched in polar residues. Over residues 590-603 (EDDDVLLVDSDEEP) the composition is skewed to acidic residues. S599 carries the phosphoserine modification. Residues K618 and K630 each participate in a glycyl lysine isopeptide (Lys-Gly) (interchain with G-Cter in SUMO) cross-link. Residues 638–650 (PADDDDEDIIALD) show a composition bias toward acidic residues.

This sequence belongs to the ubiquitin-activating E1 family. In terms of assembly, heterodimer of sae1 and uba2/sae2. The heterodimer corresponds to the two domains that are encoded on a single polypeptide chain in ubiquitin-activating enzyme E1. Interacts with ube2i. In terms of processing, sumoylated with SUMO1 and SUMO2/3 and by UBC9. Sumoylation at Lys-237 inhibits enzymatic activity. Sumoylation at the C-terminal lysine cluster plays an essential role in nuclear trafficking. In terms of tissue distribution, expressed in eye, brain and pectoral fins.

The protein localises to the cytoplasm. The protein resides in the nucleus. It functions in the pathway protein modification; protein sumoylation. Functionally, the heterodimer acts as an E1 ligase for sumo1, sumo2, and sumo3. It mediates ATP-dependent activation of sumo proteins followed by formation of a thioester bond between a sumo protein and a conserved active site cysteine residue on uba2/sae2. The polypeptide is SUMO-activating enzyme subunit 2 (uba2) (Danio rerio (Zebrafish)).